Consider the following 924-residue polypeptide: Ubiquitin carboxyl-terminal hydrolase 15 (924 aa).

Zn(2+) contacts are provided by cysteine 130, cysteine 133, cysteine 141, cysteine 144, cysteine 150, cysteine 154, histidine 163, and cysteine 167. Residues cysteine 130–cysteine 167 form an MYND-type zinc finger. Polar residues predominate over residues aspartate 226–arginine 236. 2 disordered regions span residues aspartate 226–serine 301 and serine 317–lysine 366. Basic and acidic residues predominate over residues alanine 247–serine 256. The span at glycine 331–glutamate 362 shows a compositional bias: polar residues. Positions arginine 438–serine 744 constitute a USP domain. Catalysis depends on cysteine 447, which acts as the Nucleophile. The Proton acceptor role is filled by histidine 703. Residues arginine 750–glutamate 793 are disordered. Over residues proline 764 to lysine 773 the composition is skewed to basic and acidic residues.

Belongs to the peptidase C19 family. In terms of assembly, interacts with DA1. In terms of tissue distribution, highly expressed in rosette leaves and inflorescence. Expressed at low levels in cotyledons, stems, cauline leaves and siliques.

The protein localises to the cytoplasm. It is found in the nucleus. The enzyme catalyses Thiol-dependent hydrolysis of ester, thioester, amide, peptide and isopeptide bonds formed by the C-terminal Gly of ubiquitin (a 76-residue protein attached to proteins as an intracellular targeting signal).. In terms of biological role, recognizes and hydrolyzes the peptide bond at the C-terminal Gly of ubiquitin. Involved in the processing of poly-ubiquitin precursors as well as that of ubiquitinated proteins. Involved in the regulation of organ size. Acts as a positive regulator of cell proliferation. Possesses deubiquitinating enzyme activity in vitro. The enzyme activity of UBP15 is required for its function in regulation of cell proliferation. Functions antagonistically in a common pathway with DA1 to regulate seed size. Acts maternally to regulate seed size by promoting cell proliferation in the integuments of ovules and developing seeds. Functions independently of DA2 and BB. The chain is Ubiquitin carboxyl-terminal hydrolase 15 from Arabidopsis thaliana (Mouse-ear cress).